The sequence spans 134 residues: Phosphoribosyl-AMP cyclohydrolase (134 aa).

Asp-78 contacts Mg(2+). A Zn(2+)-binding site is contributed by Cys-79. 2 residues coordinate Mg(2+): Asp-80 and Asp-82. Zn(2+)-binding residues include Cys-96 and Cys-103.

Belongs to the PRA-CH family. As to quaternary structure, homodimer. Mg(2+) serves as cofactor. It depends on Zn(2+) as a cofactor.

The protein localises to the cytoplasm. It catalyses the reaction 1-(5-phospho-beta-D-ribosyl)-5'-AMP + H2O = 1-(5-phospho-beta-D-ribosyl)-5-[(5-phospho-beta-D-ribosylamino)methylideneamino]imidazole-4-carboxamide. Its pathway is amino-acid biosynthesis; L-histidine biosynthesis; L-histidine from 5-phospho-alpha-D-ribose 1-diphosphate: step 3/9. Functionally, catalyzes the hydrolysis of the adenine ring of phosphoribosyl-AMP. This Cupriavidus taiwanensis (strain DSM 17343 / BCRC 17206 / CCUG 44338 / CIP 107171 / LMG 19424 / R1) (Ralstonia taiwanensis (strain LMG 19424)) protein is Phosphoribosyl-AMP cyclohydrolase.